The following is a 318-amino-acid chain: Ribosomal RNA small subunit methyltransferase H (318 aa).

S-adenosyl-L-methionine contacts are provided by residues 35–37 (AGH), aspartate 55, phenylalanine 84, aspartate 105, and glutamine 112. The segment at 294 to 318 (SDSELSENNRSRSAKLRIAEKIKSR) is disordered.

It belongs to the methyltransferase superfamily. RsmH family.

It is found in the cytoplasm. It catalyses the reaction cytidine(1402) in 16S rRNA + S-adenosyl-L-methionine = N(4)-methylcytidine(1402) in 16S rRNA + S-adenosyl-L-homocysteine + H(+). In terms of biological role, specifically methylates the N4 position of cytidine in position 1402 (C1402) of 16S rRNA. This is Ribosomal RNA small subunit methyltransferase H from Enterococcus faecalis (strain ATCC 700802 / V583).